The sequence spans 255 residues: 5-oxoprolinase subunit A 1 (255 aa).

It belongs to the LamB/PxpA family. Forms a complex composed of PxpA, PxpB and PxpC.

It carries out the reaction 5-oxo-L-proline + ATP + 2 H2O = L-glutamate + ADP + phosphate + H(+). Functionally, catalyzes the cleavage of 5-oxoproline to form L-glutamate coupled to the hydrolysis of ATP to ADP and inorganic phosphate. This Agrobacterium fabrum (strain C58 / ATCC 33970) (Agrobacterium tumefaciens (strain C58)) protein is 5-oxoprolinase subunit A 1.